The primary structure comprises 279 residues: uncharacterized protein (279 aa).

The signal sequence occupies residues Met-1–Ala-31.

This is an uncharacterized protein from Corynebacterium glutamicum (strain ATCC 13032 / DSM 20300 / JCM 1318 / BCRC 11384 / CCUG 27702 / LMG 3730 / NBRC 12168 / NCIMB 10025 / NRRL B-2784 / 534).